The following is a 204-amino-acid chain: Methylthioribulose-1-phosphate dehydratase (204 aa).

His95 and His97 together coordinate Zn(2+).

The protein belongs to the aldolase class II family. MtnB subfamily. Requires Zn(2+) as cofactor.

It catalyses the reaction 5-(methylsulfanyl)-D-ribulose 1-phosphate = 5-methylsulfanyl-2,3-dioxopentyl phosphate + H2O. It participates in amino-acid biosynthesis; L-methionine biosynthesis via salvage pathway; L-methionine from S-methyl-5-thio-alpha-D-ribose 1-phosphate: step 2/6. Functionally, catalyzes the dehydration of methylthioribulose-1-phosphate (MTRu-1-P) into 2,3-diketo-5-methylthiopentyl-1-phosphate (DK-MTP-1-P). This Parvibaculum lavamentivorans (strain DS-1 / DSM 13023 / NCIMB 13966) protein is Methylthioribulose-1-phosphate dehydratase.